A 112-amino-acid chain; its full sequence is UPF0102 protein C8J_0145 (112 aa).

The protein belongs to the UPF0102 family.

The polypeptide is UPF0102 protein C8J_0145 (Campylobacter jejuni subsp. jejuni serotype O:6 (strain 81116 / NCTC 11828)).